A 149-amino-acid chain; its full sequence is Protein RhiC (149 aa).

The first 23 residues, 1 to 23 (MTATLRAFGWLAAFALTVTFAQG), serve as a signal peptide directing secretion.

The protein resides in the periplasm. In terms of biological role, may be involved in plant-microbe interaction. The chain is Protein RhiC (rhiC) from Rhizobium leguminosarum bv. viciae.